Here is a 276-residue protein sequence, read N- to C-terminus: Adenylate kinase (276 aa).

51–56 (GAGKGT) serves as a coordination point for ATP. The interval 71-100 (ATGDMLRSQVAKKTPLGQAAKKIMDAGGLV) is NMP. Residues Thr72, Arg77, 98 to 100 (GLV), 127 to 130 (GFPR), and Gln134 contribute to the AMP site. The tract at residues 168 to 205 (GRLVHPASGRSYHVKFNPPKKEMTDDITGEPLIQRSDD) is LID. Residues Arg169 and 178–179 (SY) each bind ATP. The AMP site is built by Arg202 and Arg213. Residue Gln241 coordinates ATP.

Belongs to the adenylate kinase family. AK2 subfamily. As to quaternary structure, monomer.

Its subcellular location is the cytoplasm. It localises to the cytosol. The protein resides in the mitochondrion intermembrane space. It carries out the reaction AMP + ATP = 2 ADP. Its function is as follows. Catalyzes the reversible transfer of the terminal phosphate group between ATP and AMP. Plays an important role in cellular energy homeostasis and in adenine nucleotide metabolism. Adenylate kinase activity is critical for regulation of the phosphate utilization and the AMP de novo biosynthesis pathways. This chain is Adenylate kinase, found in Podospora anserina (strain S / ATCC MYA-4624 / DSM 980 / FGSC 10383) (Pleurage anserina).